A 468-amino-acid polypeptide reads, in one-letter code: 3-isopropylmalate dehydratase large subunit (468 aa).

The tract at residues 53–74 (QPSKTVATMDHNVPTDSRDLAG) is disordered. 3 residues coordinate [4Fe-4S] cluster: cysteine 347, cysteine 407, and cysteine 410.

The protein belongs to the aconitase/IPM isomerase family. LeuC type 1 subfamily. In terms of assembly, heterodimer of LeuC and LeuD. The cofactor is [4Fe-4S] cluster.

It carries out the reaction (2R,3S)-3-isopropylmalate = (2S)-2-isopropylmalate. Its pathway is amino-acid biosynthesis; L-leucine biosynthesis; L-leucine from 3-methyl-2-oxobutanoate: step 2/4. Its function is as follows. Catalyzes the isomerization between 2-isopropylmalate and 3-isopropylmalate, via the formation of 2-isopropylmaleate. This chain is 3-isopropylmalate dehydratase large subunit, found in Pasteurella multocida (strain Pm70).